A 714-amino-acid chain; its full sequence is Polyribonucleotide nucleotidyltransferase (714 aa).

Aspartate 489 and aspartate 495 together coordinate Mg(2+). The region spanning 556–615 (PKIDTIKIDVDKIKVVIGKGGETIDKIIAETGVKIDIDEEGNVSIYSSDQDAINRAKEII) is the KH domain. The S1 motif domain occupies 625-693 (GEVYHAKVVR…DKGRIDASMK (69 aa)). Residues 691-714 (SMKALVPRPPKPEKSEAKKEGKHD) form a disordered region. Positions 700–714 (PKPEKSEAKKEGKHD) are enriched in basic and acidic residues.

Belongs to the polyribonucleotide nucleotidyltransferase family. The cofactor is Mg(2+).

Its subcellular location is the cytoplasm. It catalyses the reaction RNA(n+1) + phosphate = RNA(n) + a ribonucleoside 5'-diphosphate. Its function is as follows. Involved in mRNA degradation. Catalyzes the phosphorolysis of single-stranded polyribonucleotides processively in the 3'- to 5'-direction. This is Polyribonucleotide nucleotidyltransferase from Streptococcus equi subsp. equi (strain 4047).